Consider the following 173-residue polypeptide: dCTP deaminase, dUMP-forming (173 aa).

DCTP is bound by residues 93–98 (RSSIGR), Asp-111, 119–121 (TLE), and Gln-138. Catalysis depends on Glu-121, which acts as the Proton donor/acceptor.

It belongs to the dCTP deaminase family. Homotrimer.

The catalysed reaction is dCTP + 2 H2O = dUMP + NH4(+) + diphosphate. The protein operates within pyrimidine metabolism; dUMP biosynthesis; dUMP from dCTP: step 1/1. Bifunctional enzyme that catalyzes both the deamination of dCTP to dUTP and the hydrolysis of dUTP to dUMP without releasing the toxic dUTP intermediate. This is dCTP deaminase, dUMP-forming from Leptospira borgpetersenii serovar Hardjo-bovis (strain JB197).